The primary structure comprises 429 residues: Adenosylhomocysteinase (429 aa).

Residues Thr-64, Asp-136, and Glu-161 each contribute to the substrate site. 162 to 164 (TTT) provides a ligand contact to NAD(+). 2 residues coordinate substrate: Lys-191 and Asp-195. NAD(+) is bound by residues Asn-196, 225-230 (GYGWCG), Glu-248, Asn-283, 304-306 (SGH), and Asn-351.

It belongs to the adenosylhomocysteinase family. NAD(+) is required as a cofactor.

The protein resides in the cytoplasm. It catalyses the reaction S-adenosyl-L-homocysteine + H2O = L-homocysteine + adenosine. It functions in the pathway amino-acid biosynthesis; L-homocysteine biosynthesis; L-homocysteine from S-adenosyl-L-homocysteine: step 1/1. May play a key role in the regulation of the intracellular concentration of adenosylhomocysteine. This Gloeothece citriformis (strain PCC 7424) (Cyanothece sp. (strain PCC 7424)) protein is Adenosylhomocysteinase.